A 685-amino-acid chain; its full sequence is Linoleate 9/13-lipoxygenase (685 aa).

The N-terminal stretch at 1-19 (MKRRSVLLSGVALSGTALA) is a signal peptide. In terms of domain architecture, Lipoxygenase spans 122 to 685 (ASLPASAAAQ…PSRIPASTNI (564 aa)). Positions 377, 382, 555, 559, and 685 each coordinate Fe cation.

This sequence belongs to the lipoxygenase family. As to quaternary structure, monomer. Fe cation serves as cofactor.

It localises to the periplasm. It catalyses the reaction (9Z,12Z)-octadecadienoate + O2 = (9S)-hydroperoxy-(10E,12Z)-octadecadienoate. The enzyme catalyses (9Z)-octadecenoate + O2 = (8E,10S)-10-hydroperoxy-octadeca-8-enoate. It carries out the reaction (9Z,12Z)-octadecadienoate + O2 = (8E,10S,12Z)-10-hydroperoxyoctadeca-8,12-dienoate. The catalysed reaction is (9Z,12Z,15Z)-octadecatrienoate + O2 = (8E,10S,12Z,15Z)-10-hydroperoxyoctadeca-8,12,15-trienoate. It catalyses the reaction (9Z,12Z)-octadecadienoate + O2 = (13S)-hydroperoxy-(9Z,11E)-octadecadienoate. The enzyme catalyses (9Z,12Z,15Z)-octadecatrienoate + O2 = (13S)-hydroperoxy-(9Z,11E,15Z)-octadecatrienoate. Its activity is regulated as follows. Inhibited by Ba(2+), Zn(2+) and Fe(3+). In presence of oxygen, converts linoleate into (9S)-hydroperoxy-10,12-octadecenoate (9HPOD), which spontaneously decomposes to the corresponding 9-hydroxy-10,12-octadecenoate (9HOD), and into 13-hydroperoxy-9,11-octadecenoate (13HPOD) which spontaneously decomposes to the corresponding 13-hydroxy-9,11-octadecenoate (13HOD). Also active on linolenate. To a lesser extent, is also able to convert oleate into (10S)-hydroperoxy-8E-octadecenoate, which spontaneously decomposes to the corresponding 10-hydroxy-8E-octadecenoate. Is almost not active on arachidonate. This chain is Linoleate 9/13-lipoxygenase (lox), found in Pseudomonas aeruginosa.